A 342-amino-acid chain; its full sequence is Leucine-rich repeat-containing protein 23 (342 aa).

A compositionally biased stretch (acidic residues) spans 1 to 30 (MSDEDDLEDFETDQDDLEREDDEKETEEWE). The segment at 1–42 (MSDEDDLEDFETDQDDLEREDDEKETEEWEDYRKEGEESEDW) is disordered. The stretch at 3-27 (DEDDLEDFETDQDDLEREDDEKETE) forms a coiled coil. 8 LRR repeats span residues 91-112 (HLRY…NHLT), 113-133 (NLLW…NELP), 134-154 (YLQI…ISHP), 155-176 (RLAS…DPQK), 179-199 (SLHT…INLP), 200-221 (KLKN…ENLS), 222-243 (NLTT…SKEM), and 245-266 (SLQY…AKLR). The interval 207–342 (AQNMLKKVEG…PESELDQSST (136 aa)) is interaction with RSPH9. Residues 279–317 (NPCTDENDYRQEALVQIAHLERLDKEFYEEEERAEADEI) form the LRRCT domain. Residues 306–332 (YEEEERAEADEIRQRMKEEQEQEAEVE) adopt a coiled-coil conformation. The segment at 307-342 (EEEERAEADEIRQRMKEEQEQEAEVEPESELDQSST) is disordered. The span at 314-324 (ADEIRQRMKEE) shows a compositional bias: basic and acidic residues. Residues 325 to 342 (QEQEAEVEPESELDQSST) are compositionally biased toward acidic residues.

In terms of assembly, component of the axonemal radial spoke complex. Interacts with RSPH3. Interacts with RSPH9.

Its subcellular location is the cytoplasm. The protein localises to the cytoskeleton. The protein resides in the flagellum axoneme. Functionally, essential for sperm motility and male fertility. Plays an important role in the proper assembly of the third radial spoke (RS3) head and the bridge structure between RS2 and RS3 in the sperm flagella. The sequence is that of Leucine-rich repeat-containing protein 23 (LRRC23) from Bos taurus (Bovine).